The primary structure comprises 526 residues: MLO-like protein 1 (526 aa).

The Extracellular portion of the chain corresponds to 1–11; that stretch reads MGHGGEGMSLE. Residues 12–32 traverse the membrane as a helical segment; that stretch reads FTPTWVVAGVCTVIVAISLAV. The Cytoplasmic portion of the chain corresponds to 33–61; sequence ERLLHYFGTVLKKKKQKPLYEALQKVKEE. Residues 62–82 form a helical membrane-spanning segment; that stretch reads LMLLGFISLLLTVFQGLISKF. At 83 to 160 the chain is on the extracellular side; that stretch reads CVKENVLMHM…LSLEALHHLH (78 aa). Residues 161 to 181 traverse the membrane as a helical segment; sequence IFIFVLAISHVTFCVLTVIFG. Topologically, residues 182–287 are cytoplasmic; that stretch reads STRIHQWKKW…MRALEDDFKQ (106 aa). Transmembrane regions (helical) follow at residues 288-308 and 309-329; these read VVGI…LNVN and GWHT…AVGT. The Cytoplasmic portion of the chain corresponds to 330–372; the sequence is KLEHVIAQLAHEVAEKHVAIEGDLVVKPSDEHFWFSKPQIVLY. Residues 373-393 traverse the membrane as a helical segment; the sequence is LIHFILFQNAFEIAFFFWIWV. At 394-412 the chain is on the extracellular side; sequence TYGFDSCIMGQVRYIVPRL. Residues 413-433 form a helical membrane-spanning segment; sequence VIGVFIQVLCSYSTLPLYAIV. Over 434–526 the chain is Cytoplasmic; it reads SQMGSSFKKA…NNEITPDHNN (93 aa). Residues 447–468 form a calmodulin-binding region; sequence ENVQVGLVGWAQKVKQKRDLKA. A disordered region spans residues 471–526; sequence SNGDEGSSQAGPGPDSGSGSAPAAGPGAGFAGIQLSRVTRNNAGDTNNEITPDHNN. Positions 476–495 are enriched in low complexity; that stretch reads GSSQAGPGPDSGSGSAPAAG. Over residues 506-520 the composition is skewed to polar residues; the sequence is SRVTRNNAGDTNNEI.

The protein belongs to the MLO family.

The protein resides in the cell membrane. Functionally, may be involved in modulation of pathogen defense and leaf cell death. Activity seems to be regulated by Ca(2+)-dependent calmodulin binding and seems not to require heterotrimeric G proteins. This Arabidopsis thaliana (Mouse-ear cress) protein is MLO-like protein 1 (MLO1).